Reading from the N-terminus, the 941-residue chain is PHD finger protein 14 (941 aa).

The interval 22–295 (DYDSSDDSDF…LSQSKSNEDS (274 aa)) is disordered. 2 positions are modified to phosphoserine: S26 and S29. Low complexity predominate over residues 36–47 (ASDSEGSGNGSE). The segment covering 60-72 (DSEENILEEELNE) has biased composition (acidic residues). Composition is skewed to basic and acidic residues over residues 74-85 (IQVKEEQLKNST), 94-109 (QLIKMEKKEEEENGER), and 116-132 (KEKEKEKEREKDKEKAT). S84 carries the post-translational modification Phosphoserine. The segment covering 133-166 (VSDSAAASAAGTTPATSPPAVTSPSVPTTTTTTT) has biased composition (low complexity). Position 189 is a phosphoserine (S189). Composition is skewed to acidic residues over residues 194–205 (NAMDDYDSEDDN) and 226–249 (DGDNEDDDDEGSGSEEDENDEGND). Y199 bears the Phosphotyrosine mark. S201 carries the phosphoserine modification. T280 is modified (phosphothreonine). Residues 281-290 (NDSLTLSQSK) show a composition bias toward polar residues. Residues S283, S287, S291, S295, and S301 each carry the phosphoserine modification. Residues 312-373 (ILICCVCLGD…PWFCDACKCG (62 aa)) form a PHD-type 1 zinc finger. Positions 315, 318, 332, 335, 340, and 343 each coordinate Zn(2+). S352 is subject to Phosphoserine. The Zn(2+) site is built by C367, C370, C378, C381, H398, C401, C434, C437, C451, C456, H461, C464, C488, and H491. A C2HC pre-PHD-type zinc finger spans residues 375-408 (SPSCELCPNQDGIFKETDAGRWVHIVCALYVPGV). The segment at 432-492 (KECSFCEDPR…PFFAYCKQHA (61 aa)) adopts a PHD-type 2 zinc-finger fold. S523 bears the Phosphoserine mark. Positions 623–671 (MIQIQENMAEQKNIKDKLENEQEKLHVEYNKLCESLEELQNLNGKLRSE) form a coiled coil. The PHD-type 3 zinc finger occupies 718-772 (LYSCGICKKNHDQHLLLLCDTCKLHYHLGCLDPPLTRMPRKTKNSYWQCSECDQA). Residues C721, C724, C736, C739, H744, C747, C766, and C769 each contribute to the Zn(2+) site. S774, S775, and S828 each carry phosphoserine. The tract at residues 804–855 (VPQDVPPEPKKIPIRNTRTRGRKRSFVPEEEKHEERVPRERRQRQSVLQKKP) is disordered. The segment covering 829 to 843 (FVPEEEKHEERVPRE) has biased composition (basic and acidic residues). The segment at 861–914 (RTECSTCKGTGDNENLVRCDECRLCYHFGCLDPPLKKSPKQTGYGWICQECDSS) adopts a PHD-type 4 zinc-finger fold. Residues C864, C867, C879, C882, H887, C890, C908, and C911 each contribute to the Zn(2+) site. The tract at residues 912–941 (DSSSSKEDENEAEKKNASQELSMEQKTPKK) is disordered. Residues 915–928 (SSKEDENEAEKKNA) show a composition bias toward basic and acidic residues. The span at 930 to 941 (QELSMEQKTPKK) shows a compositional bias: polar residues.

In terms of tissue distribution, high levels detected in testis, lung and spleen and low levels in muscle, heart, intestine and kidney (at protein level). Widely expressed in adult with increased levels in intestine, colon and lung.

It localises to the nucleus. The protein resides in the chromosome. The protein localises to the cytoplasm. Functionally, histone-binding protein. Binds preferentially to unmodified histone H3 but can also bind to a lesser extent to histone H3 trimethylated at 'Lys-9' (H3K9me3) as well as to histone H3 monomethylated at 'Lys-27' (H3K27ac) and trimethylated at 'Lys-27' (H3K27me3). Represses PDGFRA expression, thus playing a role in regulation of mesenchymal cell proliferation. Suppresses the expression of CDKN1A/p21 by reducing the level of trimethylation of histone H3 'Lys-4', leading to enhanced proliferation of germinal center B cells. The polypeptide is PHD finger protein 14 (Phf14) (Mus musculus (Mouse)).